Here is a 354-residue protein sequence, read N- to C-terminus: Guanine nucleotide-binding protein G(o) subunit alpha (354 aa).

Residue G2 is the site of N-myristoyl glycine attachment. Residue C3 is the site of S-palmitoyl cysteine attachment. The G-alpha domain maps to 32 to 354; it reads KDVKLLLLGA…AYNLRGCGLY (323 aa). The interval 35-48 is G1 motif; sequence KLLLLGAGESGKST. The GTP site is built by E43, K46, S47, T48, S152, L176, R177, T178, and R179. S47 lines the Mg(2+) pocket. Residues 174–182 form a G2 motif region; it reads DILRTRVKT. Mg(2+) is bound at residue T182. The segment at 197-206 is G3 motif; the sequence is FRLFDVGGQR. Residues 266–273 are G4 motif; the sequence is ILFLNKKD. GTP is bound by residues N270, D273, and C325. Residues 324-329 are G5 motif; sequence TCATDT.

It belongs to the G-alpha family. G(i/o/t/z) subfamily. G proteins are composed of 3 units; alpha, beta and gamma.

It carries out the reaction GTP + H2O = GDP + phosphate + H(+). Its function is as follows. Guanine nucleotide-binding proteins (G proteins) function as transducers downstream of G protein-coupled receptors (GPCRs) in numerous signaling cascades. The alpha chain contains the guanine nucleotide binding site and alternates between an active, GTP-bound state and an inactive, GDP-bound state. Signaling by an activated GPCR promotes GDP release and GTP binding. The alpha subunit has a low GTPase activity that converts bound GTP to GDP, thereby terminating the signal. Both GDP release and GTP hydrolysis are modulated by numerous regulatory proteins. Signaling is mediated via effector proteins, such as adenylate cyclase. Inhibits adenylate cyclase activity, leading to decreased intracellular cAMP levels. This Xenopus laevis (African clawed frog) protein is Guanine nucleotide-binding protein G(o) subunit alpha (gna0).